We begin with the raw amino-acid sequence, 200 residues long: Outer-membrane lipoprotein carrier protein (200 aa).

The signal sequence occupies residues 1 to 18; sequence MIGLFLAAPLVLSSAVWA.

Belongs to the LolA family. Monomer.

Its subcellular location is the periplasm. Its function is as follows. Participates in the translocation of lipoproteins from the inner membrane to the outer membrane. Only forms a complex with a lipoprotein if the residue after the N-terminal Cys is not an aspartate (The Asp acts as a targeting signal to indicate that the lipoprotein should stay in the inner membrane). This Photobacterium profundum (strain SS9) protein is Outer-membrane lipoprotein carrier protein.